A 278-amino-acid chain; its full sequence is Shikimate dehydrogenase (NADP(+)) (278 aa).

Shikimate-binding positions include 23–25 (SRS) and Thr70. Catalysis depends on Lys74, which acts as the Proton acceptor. Position 86 (Glu86) interacts with NADP(+). Shikimate-binding residues include Asn95 and Asp110. NADP(+)-binding positions include 135–139 (GAGGA), 159–164 (NRTKEK), and Met224. Tyr226 is a binding site for shikimate. Gly248 serves as a coordination point for NADP(+).

This sequence belongs to the shikimate dehydrogenase family. As to quaternary structure, homodimer.

The catalysed reaction is shikimate + NADP(+) = 3-dehydroshikimate + NADPH + H(+). It functions in the pathway metabolic intermediate biosynthesis; chorismate biosynthesis; chorismate from D-erythrose 4-phosphate and phosphoenolpyruvate: step 4/7. Functionally, involved in the biosynthesis of the chorismate, which leads to the biosynthesis of aromatic amino acids. Catalyzes the reversible NADPH linked reduction of 3-dehydroshikimate (DHSA) to yield shikimate (SA). The sequence is that of Shikimate dehydrogenase (NADP(+)) from Alcanivorax borkumensis (strain ATCC 700651 / DSM 11573 / NCIMB 13689 / SK2).